The chain runs to 272 residues: Probable ribosomal RNA small subunit methyltransferase A (272 aa).

The S-adenosyl-L-methionine site is built by Asn23, Leu25, Gly50, Glu71, Asp95, and Asn110.

The protein belongs to the class I-like SAM-binding methyltransferase superfamily. rRNA adenine N(6)-methyltransferase family. RsmA subfamily.

Its subcellular location is the cytoplasm. In terms of biological role, specifically dimethylates two adjacent adenosines in the loop of a conserved hairpin near the 3'-end of 16S rRNA in the 30S particle. May play a critical role in biogenesis of 30S subunits. The sequence is that of Probable ribosomal RNA small subunit methyltransferase A from Thermococcus onnurineus (strain NA1).